A 984-amino-acid polypeptide reads, in one-letter code: Putative formate dehydrogenase SAV2309 (984 aa).

In terms of domain architecture, 2Fe-2S ferredoxin-type spans 3 to 79 (EHLVVTLDGK…PMTVNTVNND (77 aa)). Residues Cys-37, Cys-48, Cys-51, and Cys-63 each contribute to the [2Fe-2S] cluster site. The 41-residue stretch at 79–119 (DVKDAQKEALDRILEKHMLYCTVCDYNNGDCEIHNTMDAWG) folds into the 4Fe-4S His(Cys)3-ligated-type domain. The [4Fe-4S] cluster site is built by His-95, Cys-99, Cys-102, Cys-109, Cys-147, Cys-150, Cys-153, Cys-157, Cys-190, Cys-193, Cys-196, Cys-200, Cys-264, Cys-267, Cys-271, and Cys-299. 4Fe-4S ferredoxin-type domains are found at residues 138-165 (PFYRYDPNQCILCGRCVEACQDIEVNET) and 181-211 (NDVPINESSCVSCGQCATVCPCNAMMEVNME). Positions 252–984 (MRKERIKKTK…YVFPGNQVDK (733 aa)) are formate dehydrogenase. The 4Fe-4S Mo/W bis-MGD-type domain maps to 257-313 (IKKTKTVCTYCGVGCSFEVWTKDREILKVQPSHDSPANKIVTCVKGKFSWGHINSDQ).

In the C-terminal section; belongs to the prokaryotic molybdopterin-containing oxidoreductase family. Requires [2Fe-2S] cluster as cofactor. [4Fe-4S] cluster serves as cofactor. It depends on Mo-bis(molybdopterin guanine dinucleotide) as a cofactor.

It carries out the reaction formate + NAD(+) = CO2 + NADH. In Staphylococcus aureus (strain Mu50 / ATCC 700699), this protein is Putative formate dehydrogenase SAV2309.